The sequence spans 622 residues: Matrilin-4 (622 aa).

Positions 1–18 (MRGLLCWPVLLLLLQPWE) are cleaved as a signal peptide. The VWFA 1 domain occupies 34–213 (DLVFVIDSSR…EFGLQFQSRL (180 aa)). Asn-69 is a glycosylation site (N-linked (GlcNAc...) asparagine). The EGF-like 1; incomplete domain maps to 215-255 (GKDQCAEGGHGCQHQCVNAWAMFHCTCNPGYKLAADNKSCL). 12 cysteine pairs are disulfide-bonded: Cys-219–Cys-230, Cys-226–Cys-239, Cys-241–Cys-254, Cys-260–Cys-271, Cys-267–Cys-280, Cys-282–Cys-295, Cys-301–Cys-312, Cys-308–Cys-321, Cys-323–Cys-336, Cys-342–Cys-353, Cys-349–Cys-362, and Cys-364–Cys-377. N-linked (GlcNAc...) asparagine glycosylation occurs at Asn-251. 3 EGF-like domains span residues 256-292 (AIDL…QQDQ), 297-337 (AIDY…RSCQ), and 342-377 (CNGV…GKSC). Residue Asn-305 is glycosylated (N-linked (GlcNAc...) asparagine). Residues 386-561 (DLVLLVDGSK…GTMTHLLENL (176 aa)) form the VWFA 2 domain. Positions 591–622 (GRTLGALESLTLNLAQLTARLEDLENQLANQK) form a coiled coil.

As to quaternary structure, interacts with COMP. As to expression, embryonic kidney, lung and placenta.

It localises to the secreted. In terms of biological role, major component of the extracellular matrix of cartilage. This chain is Matrilin-4 (MATN4), found in Homo sapiens (Human).